The sequence spans 224 residues: Elongation factor 1-beta 2 (224 aa).

Residue Ala-2 is modified to N-acetylalanine. The GST C-terminal domain maps to 14 to 65; sequence VKSVEEHLAGKTYISGDQLSVDDVKVYAAVPVKPSDAFPNASKWYESVASQL. The interval 89 to 139 is disordered; that stretch reads EAEAPAAAADDDDDMDLFGDETEEEKKAAEEREAAKKDTKKPKESGKSSVL. The segment covering 97-111 has biased composition (acidic residues); the sequence is ADDDDDMDLFGDETE. Basic and acidic residues predominate over residues 112-134; it reads EEKKAAEEREAAKKDTKKPKESG.

The protein belongs to the EF-1-beta/EF-1-delta family. As to quaternary structure, EF-1 is composed of 4 subunits: alpha, beta (1B-alpha=beta'), delta (1B-beta), and gamma (1B-gamma).

In terms of biological role, EF-1-beta and EF-1-delta stimulate the exchange of GDP bound to EF-1-alpha to GTP. The chain is Elongation factor 1-beta 2 from Arabidopsis thaliana (Mouse-ear cress).